Consider the following 379-residue polypeptide: Glutamate 5-kinase (379 aa).

ATP is bound at residue K15. 3 residues coordinate substrate: S56, D143, and N155. 175–176 (SD) provides a ligand contact to ATP. Residues 281–358 (RGTLAIDAGA…SDAAQLLGVR (78 aa)) form the PUA domain.

This sequence belongs to the glutamate 5-kinase family.

The protein localises to the cytoplasm. It catalyses the reaction L-glutamate + ATP = L-glutamyl 5-phosphate + ADP. Its pathway is amino-acid biosynthesis; L-proline biosynthesis; L-glutamate 5-semialdehyde from L-glutamate: step 1/2. In terms of biological role, catalyzes the transfer of a phosphate group to glutamate to form L-glutamate 5-phosphate. The chain is Glutamate 5-kinase from Nitrobacter winogradskyi (strain ATCC 25391 / DSM 10237 / CIP 104748 / NCIMB 11846 / Nb-255).